A 235-amino-acid polypeptide reads, in one-letter code: Auracyanin-B (235 aa).

Positions 1–21 (MSWRGSGRSNFRSRSSSNGGS) are enriched in low complexity. 2 disordered regions span residues 1 to 27 (MSWRGSGRSNFRSRSSSNGGSTFSGGS) and 64 to 107 (ATPR…NVVN). The N-terminal stretch at 1 to 56 (MSWRGSGRSNFRSRSSSNGGSTFSGGSAGGPPLIVMMGLAFGAGLIMLIVMIASNA) is a signal peptide. A propeptide spanning residues 57–80 (TAGGFVAATPRPTATPRPTAAPAP) is cleaved from the precursor. Residues 69 to 86 (TATPRPTAAPAPTQPPAA) show a composition bias toward pro residues. Low complexity predominate over residues 87–100 (QPTTAPATQAANAP). Positions 111-235 (AQTVEVRAAP…GMKGTLTVTP (125 aa)) constitute a Plastocyanin-like domain. His152, Cys217, His222, and Met227 together coordinate Cu cation.

This sequence belongs to the multicopper oxidase family. Cu cation serves as cofactor. Glycosylated.

The protein resides in the cell membrane. Its function is as follows. Probably a soluble electron acceptor for the integral membrane protein electron transfer alternative complex III (ACIII). The chain is Auracyanin-B from Chloroflexus aurantiacus (strain ATCC 29366 / DSM 635 / J-10-fl).